The sequence spans 169 residues: Shikimate kinase (169 aa).

Residue 13–18 (GAGKST) participates in ATP binding. Ser17 is a binding site for Mg(2+). Substrate is bound by residues Asp35, Arg59, and Gly80. Arg117 provides a ligand contact to ATP. Arg136 contributes to the substrate binding site. Arg153 serves as a coordination point for ATP.

This sequence belongs to the shikimate kinase family. Monomer. The cofactor is Mg(2+).

It is found in the cytoplasm. The catalysed reaction is shikimate + ATP = 3-phosphoshikimate + ADP + H(+). It functions in the pathway metabolic intermediate biosynthesis; chorismate biosynthesis; chorismate from D-erythrose 4-phosphate and phosphoenolpyruvate: step 5/7. Catalyzes the specific phosphorylation of the 3-hydroxyl group of shikimic acid using ATP as a cosubstrate. The protein is Shikimate kinase of Corynebacterium efficiens (strain DSM 44549 / YS-314 / AJ 12310 / JCM 11189 / NBRC 100395).